Consider the following 85-residue polypeptide: UPF0386 protein RHECIAT_CH0001945 (85 aa).

This sequence belongs to the UPF0386 family.

This is UPF0386 protein RHECIAT_CH0001945 from Rhizobium etli (strain CIAT 652).